The primary structure comprises 158 residues: tRNA (cytidine(34)-2'-O)-methyltransferase (158 aa).

Residues Gly103, Ile123, and Ser131 each coordinate S-adenosyl-L-methionine.

This sequence belongs to the class IV-like SAM-binding methyltransferase superfamily. RNA methyltransferase TrmH family. TrmL subfamily. As to quaternary structure, homodimer.

It is found in the cytoplasm. It catalyses the reaction cytidine(34) in tRNA + S-adenosyl-L-methionine = 2'-O-methylcytidine(34) in tRNA + S-adenosyl-L-homocysteine + H(+). The catalysed reaction is 5-carboxymethylaminomethyluridine(34) in tRNA(Leu) + S-adenosyl-L-methionine = 5-carboxymethylaminomethyl-2'-O-methyluridine(34) in tRNA(Leu) + S-adenosyl-L-homocysteine + H(+). In terms of biological role, methylates the ribose at the nucleotide 34 wobble position in the two leucyl isoacceptors tRNA(Leu)(CmAA) and tRNA(Leu)(cmnm5UmAA). Catalyzes the methyl transfer from S-adenosyl-L-methionine to the 2'-OH of the wobble nucleotide. This is tRNA (cytidine(34)-2'-O)-methyltransferase from Ancylobacter novellus (strain ATCC 8093 / DSM 506 / JCM 20403 / CCM 1077 / IAM 12100 / NBRC 12443 / NCIMB 10456) (Starkeya novella).